The chain runs to 4421 residues: MIKTSKYGLGFKWAPEFRWLLPDAAEELASPMKSDEGGLCPSTGQAMESVGFVYDNHVKIDCRCILGQEWHVQSNLIRDIFVHEDLHVVEVLTKTAVKSGTAILIKSPLHSLGGFPKGYVMGLFRSYKTKRYVVHHLSMTTSTTNFGEDFFGWIVPFGFMPSYVHKWFQFCRLYIEESDLIISNFKFDDYDFSVEAAYAEVHAEPKGKYSQKAYALLRQYRGIKPVLFVDQYGCDYSGKLADCLQAYGHYSLQDMRQKQSVWLANCDFDIVVAWHVVRDSRFVMRLQTIATICGIKYVAQPTEDVVDGDVVIREPVHLLSADAIVLKLPSLMKVMTHMDDFSIKSIYNVDLCDCGFVMQYGYVDCFNDNCDFYGWVSGNMMDGFSCPLCCTVYDSSEVKAQSSGVIPENPVLFTNSTDTVNPDSFNLYGYSVTPFGSCIYWSPRPGLWIPIIKSSVKSYDDLVYSGVVGCKSIVKETALITHALYLDYVQCKCGNLEQNHILGVNNSWCRQLLLNRGDYNMLLKNIDLFVKRRADFACKFAVCGDGFVPFLLDGLIPRSYYLIQSGIFFTSLMSQFSQEVSDMCLKMCILFMDRVSVATFYIEHYVNRLVTQFKLLGTTLVNKMVNWFNTMLDASAPATGWLLYQLLNGFFVVSQANLNFVALIPDYAKILVNKFYTFFKLLLECVTVDVLKDMPVLKTINGLVCIVGNKFYNVSTGLIPGFVLPCNAQEQQIYFFEGVAESVIVEDDVIENVKSSLSSYEYCQPPKSVEKICIIDNMYMGKCGDKFFPIVMNDKNICLLDHAWRFPCAGRKVNFNEKPVVMEIPSLMTVKVMFDLDSTFDDILGKVCSEFEVEKGVTVDDFVAVVCDAIENALNSCKEHPVVGYQVRAFLNKLNENVVYLFDEAGDEAMASRMYCTFAIEDVEDVISSEAVEDTIDGVVEDTINDDEDVVTGDNDDEDVVTGDNDDEDVVTGDNDDEDVVTGDNDDEDVVTGDNDDEDVVTGDNDDEDVVTGDNDDEDVVTGDNNDEDVVTGDNNDEESVTGDNDDQIVVTGDDVDDIESIYDFDTYKALLVFNDVYNDALFVSYGSSVETETYFKVNGLWSPTITHTNCWLRSVLLVMQKLPFKFKDLAIENMWLSYKVGYNQSFVDYLLTTIPKAIVLPQGGYVADFAYWFLNQFDINAYANWCCLKCGFSFDLNGLDAVFFYGDIVSHVCKCGHNMTLIAADLPCTLHFSLFDDNFCAFCTPKKIFIAACAVDVNVCHSVAVIGDEQIDGKFVTKFSGDKFDFIVGYGMSFSMSSFELAQLYGLCITPNVCFVKGDIINVARLVKADVIVNPANGHMLHGGGVAKAIAVAAGKKFSKETAAMVKSKGVCQVGDCYVSTGGKLCKTILNIVGPDARQDGRQSYVLLARAYKHLNNYDCCLSTLISAGIFSVPADVSLTYLLGVVDKQVILVSNNKEDFDIIQKCQITSVVGTKALAVRLTANVGRVIKFETDAYKLFLSGDDCFVSNSSVIQEVLLLRHDIQLNNDVRDYLLSKMTSLPKDWRLINKFDVINGVKTVKYFECPNSIYICSQGKDFGYVCDGSFYKATVNQVCVLLAKKIDVLLTVDGVNFKSISLTVGEVFGKILGNVFCDGIDVTKLKCSDFYADKILYQYENLSLADISAVQSSFGFDQQQLLAYYNFLTVCKWSVVVNGPFFSFEQSHNNCYVNVACLMLQHINLKFNKWQWQEAWYEFRAGRPHRLVALVLAKGHFKFDEPSDATDFIRVVLKQADLSGAICELELICDCGIKQESRVGVDAVMHFGTLAKTDLFNGYKIGCNCAGRIVHCTKLNVPFLICSNTPLSKDLPDDVVAANMFMGVGVGHYTHLKCGSPYQHYDACSVKKYTGVSGCLTDCLYLKNLTQTFTSMLTNYFLDDVEMVAYNPDLSQYYCDNGKYYTKPIIKAQFKPFAKVDGVYTNFKLVGHDICAQLNDKLGFNVDLPFVEYKVTVWPVATGDVVLASDDLYVKRYFKGCETFGKPVIWFCHDEASLNSLTYFNKPSFKSENRYSVLSVDSVSEESQGNVVTSVMESQISTKEVKLKGVRKTVKIEDAIIVNDENSSIKVVKSLSLVDVWDMYLTGCDYVVWVANELSRLVKSPTVREYIRYGIKPITIPIDLLCLRDDNQTLLVPKIFKARAIEFYGFLKWLFIYVFSLLHFTNDKTIFYTTEIASKFTFNLFCLALKNAFQTFRWSIFIKGFLVVATVFLFWFNFLYINVIFSDFYLPNISVFPIFVGRIVMWIKATFGLVTICDFYSKLGVGFTSHFCNGSFICELCHSGFDMLDTYAAIDFVQYEVDRRVLFDYVSLVKLIVELVIGYSLYTVWFYPLFCLIGLQLFTTWLPDLFMLETMHWLIRFIVFVANMLPAFVLLRFYIVVTAMYKVVGFIRHIVYGCNKAGCLFCYKRNCSVRVKCSTIVGGVIRYYDITANGGTGFCVKHQWNCFNCHSFKPGNTFITVEAAIELSKELKRPVNPTDASHYVVTDIKQVGCMMRLFYDRDGQRVYDDVDASLFVDINNLLHSKVKVVPNLYVVVVESDADRANFLNAVVFYAQSLYRPILLVDKKLITTACNGISVTQIMFDVYVDTFMSHFDVDRKSFNNFVNIAHASLREGVQLEKVLDTFVGCVRKCCSIDSDVETRFITKSMISAVAAGLEFTDENYNNLVPTYLKSDNIVAADLGVLIQNGAKHVQGNVAKVANISCIWFIDAFNQLTADLQHKLKKACVKTGLKLKLTFNKQEASVPILTTPFSLKGGVVLSNLLYILFFISLICFILLWALLPTYSVYKSDIHLPAYASFKVIDNGVVRDISVNDLCFANKFFQFDQWYESTFGSVYYHNSMDCPIVVAVMDEDIGSTMFNVPTKVLRYGFHVLHFLTYAFASDSVQCYTPHIQISYNDFYASGCVLSSLCTMFKRGDGTPHPYCYTDGVMKNASLYTSLVPHTRYSLANSNGFIRFPDVISEGIVRIVRTRSMTYCRVGACEYAEEGICFNFNSSWVLNNDYYRSMPGTFCGRDFFDLFYQFFSSLIRPIDFFSLTASSIFGAILAIVVVLVFYYLIKLKRAFGDYTSVVVINVIVWCINFLMLFVFQVYPICACVYACFYFYVTLYFPSEISVIMHLQWIVMYGAIMPFWFCVTYVAMVIANHVLWLFSYCRKIGVNVCSDSTFEETSLTTFMITKDSYCRLKNSVSDVAYNRYLSLYNKYRYYSGKMDTAAYREAACSQLAKAMETFNHNNGNDVLYQPPTASVSTSFLQSGIVKMVSPTSKIEPCLVSVTYGSMTLNGLWLDDKVYCPRHVICLSSNMNEPDYSALLCRVTLGDFTIMSGRMSLTVVSYQMQGCQLVLTVSLQNPYTPKYTFGVVKPGETFTVLAAYNGRPQGAFHVTMRSSYTIKGSFLCGSCGSVGYVLTGDSVKFVYMHQLELSTGCHTGTDFNGNFYGPYRDAQVVQLPVKDYVQTVNVIAWLYAAILNNCAWFVQNDVCSIEDFNVWAMTNGFSQVKADLVLDALASMTGVSIETLLAAIKRLYMGFQGRQILGSCTFEDELAPSDVYQQLAGVKLQSKTKRFIKETIYWILISTFLFSCIISAFVKWTIFMYINTHMIGVTLCVLCFVSFMMLLVKHKHFYLTMYIIPVLCTLFYVNYLVVYKEGFRGFTYVWLSHFVPAVNFTYVYEVFYGCILCVFAIFITMHSINHDIFSLMFLVGRIVTLISMWYFGSNLEEDVLLFITAFLGTYTWTTILSLAIAKIVANWLSVNIFYFTDVPYIKLILLSYLFIGYILSCYWGFFSLLNSVFRMPMGVYNYKISVQELRYMNANGLRPPRNSFEAILLNLKLLGIGGVPVIEVSQIQSKLTDVKCANVVLLNCLQHLHVASNSKLWQYCSVLHNEILSTSDLSVAFDKLAQLLIVLFSNPAAVDTKCLASIDEVSDDYVQDSTVLQALQSEFVNMASFVEYEVAKKNLADAKNSGSVNQQQIKQLEKACNIAKSVYERDKAVARKLERMADLALTNMYKEARINDKKSKVVSALQTMLFSMVRKLDNQALNSILDNAVKGCVPLSAIPALAANTLTIIIPDKQVFDKVVDNVYVTYAGSVWHIQTVQDADGINKQLTDISVDSNWPLVIIANRYNEVANAVMQNNELMPHKLKIQVVNSGSDINCNIPTQCYYNNVSSGRIVYAVLSDVDGLKYTKIMKDDGNCVVLELDPPCKFSIQDVKGLKIKYLYFIKGCNTLARGWVVGTLSSTIRLQAGVATEYAANSSILSLCAFSVDPKKTYLDYIQQGGVPIINCVKMLCDHAGTGMAITIKPEATINQDSYGGASVCIYCRARVEHPDVDGICKLRGKFVQVPLGIKDPILYVLTHDVCQVCGFWRDGSCSCVGSSVAVQSKDLNFLNGLGVLV.

A CoV Nsp1 globular domain is found at 54–174; sequence YDNHVKIDCR…HKWFQFCRLY (121 aa). A BetaCoV Nsp1 C-terminal domain is found at 192 to 222; sequence FSVEAAYAEVHAEPKGKYSQKAYALLRQYRG. Positions 226–488 constitute a CoV Nsp2 N-terminal domain; that stretch reads VLFVDQYGCD…LITHALYLDY (263 aa). Positions 365, 370, 386, and 389 each coordinate Zn(2+). A C4 region spans residues 365–389; that stretch reads CFNDNCDFYGWVSGNMMDGFSCPLC. In terms of domain architecture, CoV Nsp2 middle spans 493–681; the sequence is CGNLEQNHIL…VNKFYTFFKL (189 aa). A CoV Nsp2 C-terminal domain is found at 697–809; it reads LKTINGLVCI…LDHAWRFPCA (113 aa). The region spanning 811 to 923 is the Ubiquitin-like 1 domain; the sequence is RKVNFNEKPV…MYCTFAIEDV (113 aa). 9 consecutive repeat copies span residues 945 to 954, 955 to 964, 965 to 974, 975 to 984, 985 to 994, 995 to 1004, 1005 to 1014, 1015 to 1024, and 1025 to 1034. Residues 945–1034 are 9 X 10 AA tandem repeat of N-[DN]-D-E-D-V-V-T-G-D; the sequence is NDDEDVVTGD…NNDEDVVTGD (90 aa). The segment at 947–1042 is disordered; it reads DEDVVTGDND…GDNNDEESVT (96 aa). One can recognise a Peptidase C16 1 domain in the interval 1073 to 1323; sequence VFNDVYNDAL…VCFVKGDIIN (251 aa). The For PL1-PRO activity role is filled by C1111. Residues C1188, C1191, C1214, and C1216 each contribute to the Zn(2+) site. The segment at 1188 to 1216 adopts a C4-type 1 zinc-finger fold; sequence CLKCGFSFDLNGLDAVFFYGDIVSHVCKC. Residues H1262 and D1273 each act as for PL1-PRO activity in the active site. One can recognise a Macro domain in the interval 1301–1472; that stretch reads ELAQLYGLCI…IIQKCQITSV (172 aa). Residues 1528-1599 form the DPUP domain; it reads NDVRDYLLSK…TVNQVCVLLA (72 aa). Positions 1599–1654 constitute a Ubiquitin-like 2 domain; the sequence is AKKIDVLLTVDGVNFKSISLTVGEVFGKILGNVFCDGIDVTKLKCSDFYADKILYQ. One can recognise a Peptidase C16 2 domain in the interval 1668–1928; it reads SSFGFDQQQL…MVAYNPDLSQ (261 aa). C1707 (for PL2-PRO activity) is an active-site residue. The Zn(2+) site is built by C1785, C1787, C1819, and C1821. The C4-type 2 zinc finger occupies 1785–1821; it reads CDCGIKQESRVGVDAVMHFGTLAKTDLFNGYKIGCNC. Residues H1864 and D1878 each act as for PL2-PRO activity in the active site. In terms of domain architecture, Nucleic acid-binding spans 1942-2043; the sequence is IKAQFKPFAK…TYFNKPSFKS (102 aa). A G2M domain is found at 2058 to 2207; sequence ESQGNVVTSV…NDKTIFYTTE (150 aa). The next 3 helical transmembrane spans lie at 2176–2196, 2237–2257, and 2268–2288; these read AIEFYGFLKWLFIYVFSLLHF, FLVVATVFLFWFNFLYINVIF, and FPIFVGRIVMWIKATFGLVTI. Residues 2176–2413 form an HD1 region; that stretch reads AIEFYGFLKW…FVLLRFYIVV (238 aa). A 3Ecto domain is found at 2273 to 2334; that stretch reads GRIVMWIKAT…AIDFVQYEVD (62 aa). Intrachain disulfides connect C2289–C2313 and C2304–C2310. The next 2 helical transmembrane spans lie at 2351–2371 and 2393–2413; these read LVIGYSLYTVWFYPLFCLIGL and FIVFVANMLPAFVLLRFYIVV. Residues 2421–2511 are Y1; it reads GFIRHIVYGC…ELKRPVNPTD (91 aa). The 368-residue stretch at 2421 to 2788 folds into the CoV Nsp3 Y domain; it reads GFIRHIVYGC…LTTPFSLKGG (368 aa). 8 residues coordinate Zn(2+): H2425, C2430, C2435, C2438, C2471, H2474, C2478, and C2481. Positions 2425–2438 are ZF1; the sequence is HIVYGCNKAGCLFC. Positions 2471-2481 are ZF2; sequence CVKHQWNCFNC. The Y2 stretch occupies residues 2512-2604; it reads ASHYVVTDIK…LVDKKLITTA (93 aa). The segment at 2512–2788 is coV-Y; sequence ASHYVVTDIK…LTTPFSLKGG (277 aa). A Y3 region spans residues 2605 to 2687; sequence CNGISVTQIM…KSMISAVAAG (83 aa). Residues 2688-2788 are Y4; sequence LEFTDENYNN…LTTPFSLKGG (101 aa). A run of 5 helical transmembrane segments spans residues 2794 to 2814, 3069 to 3089, 3101 to 3121, 3128 to 3148, and 3153 to 3173; these read LLYILFFISLICFILLWALLP, ASSIFGAILAIVVVLVFYYLI, VVVINVIVWCINFLMLFVFQV, VYACFYFYVTLYFPSEISVIM, and IVMYGAIMPFWFCVTYVAMVI. Residues 2794 to 3173 form an HD2 region; that stretch reads LLYILFFISL…FCVTYVAMVI (380 aa). The Nsp4C domain occupies 3187 to 3284; the sequence is IGVNVCSDST…TASVSTSFLQ (98 aa). The Peptidase C30 domain occupies 3285-3587; the sequence is SGIVKMVSPT…YQQLAGVKLQ (303 aa). Residues H3325 and C3429 each act as for 3CL-PRO activity in the active site. 7 consecutive transmembrane segments (helical) span residues 3601-3621, 3626-3646, 3651-3671, 3694-3714, 3722-3742, 3750-3770, and 3793-3813; these read ILISTFLFSCIISAFVKWTIF, THMIGVTLCVLCFVSFMMLLV, FYLTMYIIPVLCTLFYVNYLV, FTYVYEVFYGCILCVFAIFIT, IFSLMFLVGRIVTLISMWYFG, LLFITAFLGTYTWTTILSLAI, and LILLSYLFIGYILSCYWGFFS. The tract at residues 3601–3813 is HD3; the sequence is ILISTFLFSC…ILSCYWGFFS (213 aa). Positions 3875–3963 constitute a RdRp Nsp7 cofactor domain; sequence SKLTDVKCAN…DYVQDSTVLQ (89 aa). One can recognise a RdRp Nsp8 cofactor domain in the interval 3964–4160; the sequence is ALQSEFVNMA…YNEVANAVMQ (197 aa). In terms of domain architecture, Nsp9 ssRNA-binding spans 4161-4270; the sequence is NNELMPHKLK…GTLSSTIRLQ (110 aa). Residues 4271-4408 form the ExoN/MTase coactivator domain; that stretch reads AGVATEYAAN…CVGSSVAVQS (138 aa). Zn(2+) is bound by residues C4344, C4347, H4353, C4360, C4386, C4389, C4397, and C4399. Zinc fingers lie at residues 4344–4360 and 4386–4399; these read CIYCRARVEHPDVDGIC and CQVCGFWRDGSCSC.

This sequence belongs to the coronaviruses polyprotein 1ab family. As to quaternary structure, 3CL-PRO exists as monomer and homodimer. Eight copies of nsp7 and eight copies of nsp8 assemble to form a heterohexadecamer. Nsp9 is a dimer. Nsp10 forms a dodecamer. In terms of processing, specific enzymatic cleavages in vivo by its own proteases yield mature proteins. 3CL-PRO and PL-PRO proteinases are autocatalytically processed.

The protein localises to the host membrane. It is found in the host cytoplasm. Its subcellular location is the host perinuclear region. It catalyses the reaction Thiol-dependent hydrolysis of ester, thioester, amide, peptide and isopeptide bonds formed by the C-terminal Gly of ubiquitin (a 76-residue protein attached to proteins as an intracellular targeting signal).. The catalysed reaction is TSAVLQ-|-SGFRK-NH2 and SGVTFQ-|-GKFKK the two peptides corresponding to the two self-cleavage sites of the SARS 3C-like proteinase are the two most reactive peptide substrates. The enzyme exhibits a strong preference for substrates containing Gln at P1 position and Leu at P2 position.. It carries out the reaction a 5'-end diphospho-ribonucleoside in mRNA + GTP + H(+) = a 5'-end (5'-triphosphoguanosine)-ribonucleoside in mRNA + diphosphate. Its function is as follows. The papain-like proteinase 1 (PL1-PRO) and papain-like proteinase 2 (PL2-PRO) are responsible for the cleavages located at the N-terminus of the replicase polyprotein. In addition, PLP2 possesses a deubiquitinating/deISGylating activity and processes both 'Lys-48'- and 'Lys-63'-linked polyubiquitin chains from cellular substrates. Antagonizes innate immune induction of type I interferon by blocking the phosphorylation, dimerization and subsequent nuclear translocation of host IRF-3. In terms of biological role, responsible for the majority of cleavages as it cleaves the C-terminus of replicase polyprotein at 11 sites. Recognizes substrates containing the core sequence [ILMVF]-Q-|-[SGACN]. Inhibited by the substrate-analog Cbz-Val-Asn-Ser-Thr-Leu-Gln-CMK. Also contains an ADP-ribose-1''-phosphate (ADRP)-binding function. Functionally, nsp7-nsp8 hexadecamer may possibly confer processivity to the polymerase, maybe by binding to dsRNA or by producing primers utilized by the latter. Catalytic subunit of viral RNA capping enzyme which catalyzes the RNA guanylyltransferase reaction for genomic and sub-genomic RNAs. The kinase-like NiRAN domain of NSP12 transfers RNA to the amino terminus of NSP9, forming a covalent RNA-protein intermediate. Subsequently, the NiRAN domain transfers RNA to GDP, forming the core cap structure GpppA-RNA. The NSP14 and NSP16 methyltransferases then add methyl groups to form functional cap structures. Its function is as follows. Binds to the 40S ribosomal subunit and inhibits host translation. The nsp1-40S ribosome complex further induces an endonucleolytic cleavage near the 5'UTR of host mRNAs, targeting them for degradation. By suppressing host gene expression, nsp1 facilitates efficient viral gene expression in infected cells and evasion from host immune response. In Human coronavirus HKU1 (isolate N5) (HCoV-HKU1), this protein is Replicase polyprotein 1a.